A 52-amino-acid chain; its full sequence is Teratocyte protein CftICK-I (52 aa).

A signal peptide spans 1 to 19; it reads MYKLCILFLVVIFAVMAIA. Disulfide bonds link cysteine 22–cysteine 37, cysteine 29–cysteine 41, and cysteine 36–cysteine 51.

Abundantly expressed by teratocytes, which are extra-embryonic cells released by parasitoid wasps into their hosts during larval eclosion.

It localises to the secreted. In terms of biological role, this endoparasitoid wasp peptide has immununosuppressive, antimicrobial and insecticidal activities. Suppress cellular immunity which is detectable as a reduction of hemocyte encapsulation in the host. Shows potent antifungal activity against C.albicans (MIC~0.25 ug/ml). In vivo, ingestion of this peptide (probably at excessive doses) increases larval mortality and reduces leaf consumption of D.saccharalis, a permissive host for C.flavipes. The chain is Teratocyte protein CftICK-I from Cotesia flavipes (Parasitic wasp).